Here is a 258-residue protein sequence, read N- to C-terminus: Regulatory protein RecX (258 aa).

It belongs to the RecX family.

Its subcellular location is the cytoplasm. In terms of biological role, modulates RecA activity. The polypeptide is Regulatory protein RecX (Streptococcus pneumoniae (strain Hungary19A-6)).